The chain runs to 55 residues: Rubredoxin-2 (55 aa).

In terms of domain architecture, Rubredoxin-like spans 1–54 (MRKWQCVVCGFIYDEALGLPEEGIPAGTRWEDIPADWVCPDCGVGKIDFEMIEI). Residues Cys6, Cys9, Cys39, and Cys42 each coordinate Fe cation.

The protein belongs to the rubredoxin family. The cofactor is Fe(3+).

It is found in the cytoplasm. It participates in hydrocarbon metabolism; alkane degradation. Involved in the hydrocarbon hydroxylating system, which transfers electrons from NADH to rubredoxin reductase and then through rubredoxin to alkane 1 monooxygenase. This Pseudomonas aeruginosa (strain ATCC 15692 / DSM 22644 / CIP 104116 / JCM 14847 / LMG 12228 / 1C / PRS 101 / PAO1) protein is Rubredoxin-2 (rubA2).